A 794-amino-acid chain; its full sequence is Mitochondrial intermediate peptidase (794 aa).

The transit peptide at 1–39 (MRVTSSRLLQGGSLVSRVLKRRLNNASRTKKGWFSTRTL) directs the protein to the mitochondrion. His-581 is a binding site for Zn(2+). The active site involves Glu-582. The Zn(2+) site is built by His-585 and His-588.

This sequence belongs to the peptidase M3 family. Zn(2+) is required as a cofactor.

The protein resides in the mitochondrion matrix. The catalysed reaction is Release of an N-terminal octapeptide as second stage of processing of some proteins imported into the mitochondrion.. Functionally, cleaves proteins, imported into the mitochondrion, to their mature size. While most mitochondrial precursor proteins are processed to the mature form in one step by mitochondrial processing peptidase (MPP), the sequential cleavage by MIP of an octapeptide after initial processing by MPP is a required step for a subgroup of nuclear-encoded precursor proteins destined for the matrix or the inner membrane. This chain is Mitochondrial intermediate peptidase (OCT1), found in Debaryomyces hansenii (strain ATCC 36239 / CBS 767 / BCRC 21394 / JCM 1990 / NBRC 0083 / IGC 2968) (Yeast).